Consider the following 410-residue polypeptide: Histone-lysine N-methyltransferase SUV39H2 (410 aa).

In terms of domain architecture, Chromo spans 47–105; sequence YEVEYLCDYKVVKDMEYYLVKWKGWPDSTNTWEPLQNLKCPLLLQQFSNDKHNYLSQVK. Residues 189–247 enclose the Pre-SET domain; it reads FGCSCTDCFFQKCCPAEAGVLLAYNKNQQIKIPPGTPIYECNSRCQCGPDCPNRIVQKG. Residues Cys191, Cys193, Cys196, Cys201, Cys202, Cys229, Cys233, Cys235, and Cys239 each contribute to the Zn(2+) site. The region spanning 250–373 is the SET domain; sequence YSLCIFRTSN…AGEELTFDYQ (124 aa). S-adenosyl-L-methionine-binding positions include 261 to 263 and 330 to 331; these read RGW and NH. Cys333 is a binding site for Zn(2+). An S-adenosyl-L-methionine-binding site is contributed by Tyr372. Phosphoserine occurs at positions 381, 384, and 388. Positions 394–410 constitute a Post-SET domain; the sequence is VRTVCKCGAVTCRGYLN. Zn(2+) is bound at residue Cys398. Residue Lys399 coordinates S-adenosyl-L-methionine. Positions 400 and 405 each coordinate Zn(2+).

The protein belongs to the class V-like SAM-binding methyltransferase superfamily. Histone-lysine methyltransferase family. Suvar3-9 subfamily. In terms of assembly, interacts with SMAD5. The large PER complex involved in the histone methylation is composed of at least PER2, CBX3, TRIM28, SUV39H1 and/or SUV39H2; CBX3 mediates the formation of the complex. In terms of processing, ubiquitinated by the DCX(DCAF13) E3 ubiquitin ligase complex, leading to its degradation.

The protein resides in the nucleus. The protein localises to the chromosome. Its subcellular location is the centromere. It carries out the reaction L-lysyl(9)-[histone H3] + 3 S-adenosyl-L-methionine = N(6),N(6),N(6)-trimethyl-L-lysyl(9)-[histone H3] + 3 S-adenosyl-L-homocysteine + 3 H(+). In terms of biological role, histone methyltransferase that specifically trimethylates 'Lys-9' of histone H3 using monomethylated H3 'Lys-9' as substrate. H3 'Lys-9' trimethylation represents a specific tag for epigenetic transcriptional repression by recruiting HP1 (CBX1, CBX3 and/or CBX5) proteins to methylated histones. Mainly functions in heterochromatin regions, thereby playing a central role in the establishment of constitutive heterochromatin at pericentric and telomere regions. H3 'Lys-9' trimethylation is also required to direct DNA methylation at pericentric repeats. SUV39H1 is targeted to histone H3 via its interaction with RB1 and is involved in many processes, such as cell cycle regulation, transcriptional repression and regulation of telomere length. May participate in regulation of higher-order chromatin organization during spermatogenesis. Recruited by the large PER complex to the E-box elements of the circadian target genes such as PER2 itself or PER1, contributes to the conversion of local chromatin to a heterochromatin-like repressive state through H3 'Lys-9' trimethylation. The protein is Histone-lysine N-methyltransferase SUV39H2 (SUV39H2) of Homo sapiens (Human).